The primary structure comprises 193 residues: Acyl carrier protein phosphodiesterase (193 aa).

Belongs to the AcpH family.

The catalysed reaction is holo-[ACP] + H2O = apo-[ACP] + (R)-4'-phosphopantetheine + H(+). Functionally, converts holo-ACP to apo-ACP by hydrolytic cleavage of the phosphopantetheine prosthetic group from ACP. This is Acyl carrier protein phosphodiesterase from Pectobacterium atrosepticum (strain SCRI 1043 / ATCC BAA-672) (Erwinia carotovora subsp. atroseptica).